The following is a 451-amino-acid chain: Glutamyl-tRNA(Gln) amidotransferase subunit D (451 aa).

A disordered region spans residues 78-97 (PREAPTPGEEEGSQEDFGQP). One can recognise an Asparaginase/glutaminase domain in the interval 99–432 (PRVFFVGTGG…EEIQRLFTAN (334 aa)). Catalysis depends on residues threonine 109, threonine 187, aspartate 188, and lysine 266.

This sequence belongs to the asparaginase 1 family. GatD subfamily. In terms of assembly, heterodimer of GatD and GatE.

It carries out the reaction L-glutamyl-tRNA(Gln) + L-glutamine + ATP + H2O = L-glutaminyl-tRNA(Gln) + L-glutamate + ADP + phosphate + H(+). Its function is as follows. Allows the formation of correctly charged Gln-tRNA(Gln) through the transamidation of misacylated Glu-tRNA(Gln) in organisms which lack glutaminyl-tRNA synthetase. The reaction takes place in the presence of glutamine and ATP through an activated gamma-phospho-Glu-tRNA(Gln). The GatDE system is specific for glutamate and does not act on aspartate. In Thermofilum pendens (strain DSM 2475 / Hrk 5), this protein is Glutamyl-tRNA(Gln) amidotransferase subunit D.